We begin with the raw amino-acid sequence, 199 residues long: Acireductone dioxygenase 1 (199 aa).

Fe(2+) contacts are provided by histidine 99, histidine 101, glutamate 105, and histidine 144. 4 residues coordinate Ni(2+): histidine 99, histidine 101, glutamate 105, and histidine 144.

The protein belongs to the acireductone dioxygenase (ARD) family. Fe(2+) is required as a cofactor. The cofactor is Ni(2+).

The protein localises to the cytoplasm. It localises to the nucleus. The enzyme catalyses 1,2-dihydroxy-5-(methylsulfanyl)pent-1-en-3-one + O2 = 4-methylsulfanyl-2-oxobutanoate + formate + 2 H(+). The catalysed reaction is 1,2-dihydroxy-5-(methylsulfanyl)pent-1-en-3-one + O2 = 3-(methylsulfanyl)propanoate + CO + formate + 2 H(+). The protein operates within amino-acid biosynthesis; L-methionine biosynthesis via salvage pathway; L-methionine from S-methyl-5-thio-alpha-D-ribose 1-phosphate: step 5/6. Functionally, catalyzes 2 different reactions between oxygen and the acireductone 1,2-dihydroxy-3-keto-5-methylthiopentene (DHK-MTPene) depending upon the metal bound in the active site. Fe-containing acireductone dioxygenase (Fe-ARD) produces formate and 2-keto-4-methylthiobutyrate (KMTB), the alpha-ketoacid precursor of methionine in the methionine recycle pathway. Ni-containing acireductone dioxygenase (Ni-ARD) produces methylthiopropionate, carbon monoxide and formate, and does not lie on the methionine recycle pathway. The chain is Acireductone dioxygenase 1 (ARD1) from Arabidopsis thaliana (Mouse-ear cress).